Here is a 4306-residue protein sequence, read N- to C-terminus: Cytoplasmic dynein 2 heavy chain 1 (4306 aa).

The interval 1–1650 is stem; that stretch reads MAGSLGDVRK…YVQMVDSELQ (1650 aa). 145–152 provides a ligand contact to ATP; sequence LGIVLRKS. A coiled-coil region spans residues 669–696; it reads KELEGYIQKLQNAAERLATENRRLRKWH. 4 AAA regions span residues 1651–1875, 1941–2161, 2249–2505, and 2617–2862; these read YTYE…VLRG, SALK…KQND, LTAD…WVLG, and HYGR…ESCK. ATP-binding positions include 1689 to 1696, 1979 to 1986, 2291 to 2298, and 2655 to 2662; these read GPAGTGKT, GPSGAGKS, GPEGCGKG, and GRSGVGRR. The segment at 2880-3168 is stalk; that stretch reads AISSSKKKEL…AEVSKAQETI (289 aa). 3 coiled-coil regions span residues 2896–2981, 3108–3199, and 3407–3441; these read LQAG…KEVQ, LETE…LATL, and IQHEKPDLEEQKTKLLQQEEDKKIQLARLEESLLE. AAA regions lie at residues 3243–3472 and 3689–3904; these read LCTE…LIQD and MALF…VIDR.

It belongs to the dynein heavy chain family. The cytoplasmic dynein complex 2 is probably composed by a heavy chain DYNC2H1 homodimer and a number of DYNC2LI1 light intermediate chains. As to expression, detected in brain, lung, spleen and kidney (at protein level). Enriched in the ependymal layer lining the lateral ventricles (at protein level).

It is found in the cytoplasm. The protein localises to the cytoskeleton. Its subcellular location is the cilium axoneme. The protein resides in the cell membrane. Functionally, may function as a motor for intraflagellar retrograde transport. Functions in cilia biogenesis. According to PubMed:8666668, it may play a role in transport between endoplasmic reticulum and Golgi or organization of the Golgi in cells. The chain is Cytoplasmic dynein 2 heavy chain 1 (Dync2h1) from Mus musculus (Mouse).